A 36-amino-acid polypeptide reads, in one-letter code: Photosystem II reaction center protein M (36 aa).

The chain crosses the membrane as a helical span at residues 5–25 (ILGLIATALFIIIPTSFLLIL).

It belongs to the PsbM family. In terms of assembly, PSII is composed of 1 copy each of membrane proteins PsbA, PsbB, PsbC, PsbD, PsbE, PsbF, PsbH, PsbI, PsbJ, PsbK, PsbL, PsbM, PsbT, PsbX, PsbY, PsbZ, Psb30/Ycf12, at least 3 peripheral proteins of the oxygen-evolving complex and a large number of cofactors. It forms dimeric complexes.

It localises to the plastid. The protein localises to the chloroplast thylakoid membrane. Functionally, one of the components of the core complex of photosystem II (PSII). PSII is a light-driven water:plastoquinone oxidoreductase that uses light energy to abstract electrons from H(2)O, generating O(2) and a proton gradient subsequently used for ATP formation. It consists of a core antenna complex that captures photons, and an electron transfer chain that converts photonic excitation into a charge separation. This subunit is found at the monomer-monomer interface. The chain is Photosystem II reaction center protein M from Chlorokybus atmophyticus (Soil alga).